The primary structure comprises 257 residues: 7-carboxy-7-deazaguanine synthase (257 aa).

Substrate contacts are provided by residues 29–31 and R44; that span reads LQG. Residues 35-253 enclose the Radical SAM core domain; the sequence is LAGTPSVFVR…PRLHVALWND (219 aa). [4Fe-4S] cluster-binding residues include C48, C52, and C55. S57 provides a ligand contact to Mg(2+). T90 contacts substrate. Position 92 (G92) interacts with S-adenosyl-L-methionine. A disordered region spans residues 133–153; sequence VSPKLASSTPTAETDPKGDGE.

The protein belongs to the radical SAM superfamily. 7-carboxy-7-deazaguanine synthase family. As to quaternary structure, homodimer. [4Fe-4S] cluster serves as cofactor. The cofactor is S-adenosyl-L-methionine. Mg(2+) is required as a cofactor.

The catalysed reaction is 6-carboxy-5,6,7,8-tetrahydropterin + H(+) = 7-carboxy-7-deazaguanine + NH4(+). Its pathway is purine metabolism; 7-cyano-7-deazaguanine biosynthesis. Catalyzes the complex heterocyclic radical-mediated conversion of 6-carboxy-5,6,7,8-tetrahydropterin (CPH4) to 7-carboxy-7-deazaguanine (CDG), a step common to the biosynthetic pathways of all 7-deazapurine-containing compounds. This is 7-carboxy-7-deazaguanine synthase from Halobacterium salinarum (strain ATCC 29341 / DSM 671 / R1).